The primary structure comprises 512 residues: 2,3-bisphosphoglycerate-independent phosphoglycerate mutase (512 aa).

Mn(2+)-binding residues include Asp11 and Ser61. Ser61 serves as the catalytic Phosphoserine intermediate. Substrate is bound by residues His122, 152 to 153 (RD), Arg184, Arg190, 259 to 262 (RADR), and Lys332. Asp399, His403, Asp440, His441, and His459 together coordinate Mn(2+).

This sequence belongs to the BPG-independent phosphoglycerate mutase family. As to quaternary structure, monomer. Mn(2+) is required as a cofactor.

The catalysed reaction is (2R)-2-phosphoglycerate = (2R)-3-phosphoglycerate. It functions in the pathway carbohydrate degradation; glycolysis; pyruvate from D-glyceraldehyde 3-phosphate: step 3/5. Catalyzes the interconversion of 2-phosphoglycerate and 3-phosphoglycerate. The polypeptide is 2,3-bisphosphoglycerate-independent phosphoglycerate mutase (Francisella tularensis subsp. tularensis (strain WY96-3418)).